We begin with the raw amino-acid sequence, 222 residues long: Ribosomal RNA small subunit methyltransferase G (222 aa).

S-adenosyl-L-methionine is bound by residues G84, F89, 141 to 142 (VE), and R154.

Belongs to the methyltransferase superfamily. RNA methyltransferase RsmG family.

It localises to the cytoplasm. The catalysed reaction is guanosine(527) in 16S rRNA + S-adenosyl-L-methionine = N(7)-methylguanosine(527) in 16S rRNA + S-adenosyl-L-homocysteine. Specifically methylates the N7 position of guanine in position 527 of 16S rRNA. The chain is Ribosomal RNA small subunit methyltransferase G from Bradyrhizobium sp. (strain ORS 278).